The primary structure comprises 478 residues: Bifunctional protein HldE (478 aa).

Residues 1 to 318 (MKITLPDFTR…ENAIHARPES (318 aa)) form a ribokinase region. 195-198 (NLSE) is an ATP binding site. Asp-264 is a catalytic residue. The tract at residues 344 to 478 (MTNGVFDILH…KTIISGSGKN (135 aa)) is cytidylyltransferase.

It in the N-terminal section; belongs to the carbohydrate kinase PfkB family. This sequence in the C-terminal section; belongs to the cytidylyltransferase family. Homodimer.

It catalyses the reaction D-glycero-beta-D-manno-heptose 7-phosphate + ATP = D-glycero-beta-D-manno-heptose 1,7-bisphosphate + ADP + H(+). It carries out the reaction D-glycero-beta-D-manno-heptose 1-phosphate + ATP + H(+) = ADP-D-glycero-beta-D-manno-heptose + diphosphate. It participates in nucleotide-sugar biosynthesis; ADP-L-glycero-beta-D-manno-heptose biosynthesis; ADP-L-glycero-beta-D-manno-heptose from D-glycero-beta-D-manno-heptose 7-phosphate: step 1/4. Its pathway is nucleotide-sugar biosynthesis; ADP-L-glycero-beta-D-manno-heptose biosynthesis; ADP-L-glycero-beta-D-manno-heptose from D-glycero-beta-D-manno-heptose 7-phosphate: step 3/4. Catalyzes the phosphorylation of D-glycero-D-manno-heptose 7-phosphate at the C-1 position to selectively form D-glycero-beta-D-manno-heptose-1,7-bisphosphate. Functionally, catalyzes the ADP transfer from ATP to D-glycero-beta-D-manno-heptose 1-phosphate, yielding ADP-D-glycero-beta-D-manno-heptose. The protein is Bifunctional protein HldE of Erwinia tasmaniensis (strain DSM 17950 / CFBP 7177 / CIP 109463 / NCPPB 4357 / Et1/99).